The chain runs to 389 residues: Pyruvate dehydrogenase E1 component subunit alpha, somatic form, mitochondrial (389 aa).

A mitochondrion-targeting transit peptide spans 1–28; sequence GKMLAAVSRVLSGVAQKPASRVLVASRT. Lys-62 bears the N6-acetyllysine; alternate mark. Lys-62 is subject to N6-succinyllysine; alternate. Residues His-91, Tyr-117, Arg-118, Ala-156, Gly-164, Val-166, Asp-195, Gly-196, Ala-197, Asn-224, and Tyr-226 each contribute to the pyruvate site. Positions 117 and 118 each coordinate thiamine diphosphate. Positions 164, 166, 195, 196, 197, and 224 each coordinate thiamine diphosphate. Mg(2+) is bound at residue Asp-195. 2 residues coordinate Mg(2+): Asn-224 and Tyr-226. Ser-231 carries the post-translational modification Phosphoserine; by PDK1. Lys-243 is subject to N6-acetyllysine; alternate. At Lys-243 the chain carries N6-succinyllysine; alternate. An N6-succinyllysine modification is found at Lys-276. His-291 is a thiamine diphosphate binding site. Residue Ser-292 is modified to Phosphoserine; by PDK1, PDK2, PDK3 and PDK4. Phosphoserine is present on Ser-294. At Ser-299 the chain carries Phosphoserine; by PDK1, PDK2, PDK3 and PDK4. Residue Tyr-300 is modified to Phosphotyrosine. N6-acetyllysine; alternate is present on Lys-312. Lys-312 is subject to N6-succinyllysine; alternate. Lys-320 and Lys-335 each carry N6-acetyllysine. Position 384 is an N6-succinyllysine (Lys-384).

Heterotetramer of two PDHA1 and two PDHB subunits. The heterotetramer interacts with DLAT, and is part of the multimeric pyruvate dehydrogenase complex that contains multiple copies of pyruvate dehydrogenase (E1), dihydrolipoamide acetyltransferase (DLAT, E2) and lipoamide dehydrogenase (DLD, E3). These subunits are bound to an inner core composed of about 48 DLAT and 12 PDHX molecules. It depends on thiamine diphosphate as a cofactor. Requires Mg(2+) as cofactor. Post-translationally, phosphorylation at Ser-231, Ser-292 and Ser-299 by PDK family kinases inactivates the enzyme; for this phosphorylation at a single site is sufficient. Phosphorylation at Ser-292 interferes with access to active site, and thereby inactivates the enzyme. Dephosphorylation at all three sites, i.e. at Ser-231, Ser-292 and Ser-299, is required for reactivation. In terms of processing, acetylation alters the phosphorylation pattern. Deacetylated by SIRT3.

It is found in the mitochondrion matrix. It catalyses the reaction N(6)-[(R)-lipoyl]-L-lysyl-[protein] + pyruvate + H(+) = N(6)-[(R)-S(8)-acetyldihydrolipoyl]-L-lysyl-[protein] + CO2. Its activity is regulated as follows. Pyruvate dehydrogenase activity is inhibited by phosphorylation of PDHA1; it is reactivated by dephosphorylation. Its function is as follows. The pyruvate dehydrogenase complex catalyzes the overall conversion of pyruvate to acetyl-CoA and CO(2), and thereby links the glycolytic pathway to the tricarboxylic cycle. In Sus scrofa (Pig), this protein is Pyruvate dehydrogenase E1 component subunit alpha, somatic form, mitochondrial (PDHA1).